We begin with the raw amino-acid sequence, 414 residues long: Secernin-1 (414 aa).

Alanine 2 is modified (N-acetylalanine). Residue cysteine 9 is part of the active site.

This sequence belongs to the peptidase C69 family. Secernin subfamily.

The protein localises to the cytoplasm. In terms of biological role, regulates exocytosis in mast cells. Increases both the extent of secretion and the sensitivity of mast cells to stimulation with calcium. This is Secernin-1 (SCRN1) from Bos taurus (Bovine).